The chain runs to 548 residues: MDSQRNLLVIALLFVSFMIWQAWEQDKNPQPQAQQTTQTTTTAAGSAADQGVPASGQGKLISVKTDVLDLTINTRGGDVEQALLPAYPKELNSTQPFQLLETSPQFIYQAQSGLTGRDGPDNPANGPRPLYNVEKDAYVLAEGQNELQVPMTYTDAAGNTFTKTFVLKRGDYAVNVNYNVQNAGEKPLEISSFGQLKQSITLPPHLDTGSSNFALHTFRGAAYSTPDEKYEKYKFDTIADNENLNISSKGGWVAMLQQYFATAWIPHNDGTNNFYTANLGNGIVAIGYKSQPVLVQPGQTGAMNSTLWVGPEIQDKMAAVAPHLDLTVDYGWLWFISQPLFKLLKWIHSFVGNWGFSIIIITFIVRGIMYPLTKAQYTSMAKMRMLQPKIQAMRERLGDDKQRISQEMMALYKAEKVNPLGGCFPLLIQMPIFLALYYMLMGSVELRQAPFALWIHDLSAQDPYYILPILMGVTMFFIQKMSPTTVTDPMQQKIMTFMPVIFTVFFLWFPSGLVLYYIVSNLVTIIQQQLIYRGLEKRGLHSREKKKS.

Residues 6–26 (NLLVIALLFVSFMIWQAWEQD) traverse the membrane as a helical segment. The segment at 28-55 (NPQPQAQQTTQTTTTAAGSAADQGVPAS) is disordered. Residues 30-50 (QPQAQQTTQTTTTAAGSAADQ) are compositionally biased toward low complexity. The next 4 membrane-spanning stretches (helical) occupy residues 350–370 (FVGN…GIMY), 420–440 (LGGC…YYML), 458–478 (LSAQ…MFFI), and 499–519 (PVIF…YYIV).

The protein belongs to the OXA1/ALB3/YidC family. Type 1 subfamily. Interacts with the Sec translocase complex via SecD. Specifically interacts with transmembrane segments of nascent integral membrane proteins during membrane integration.

The protein resides in the cell inner membrane. Required for the insertion and/or proper folding and/or complex formation of integral membrane proteins into the membrane. Involved in integration of membrane proteins that insert both dependently and independently of the Sec translocase complex, as well as at least some lipoproteins. Aids folding of multispanning membrane proteins. The sequence is that of Membrane protein insertase YidC from Shigella flexneri.